Reading from the N-terminus, the 124-residue chain is MATVNQLVRKPRAPKVDKTNVPALAACPQKRGVCTRVYTTTPKKPNSALRKVARVRLTNGFEVTSYIGGEGHNLQEHSVILIRGGRVKDLPGVRYHTVRGALDCAGVSERRQGRSKYGAKRPKS.

3-methylthioaspartic acid is present on Asp89.

It belongs to the universal ribosomal protein uS12 family. Part of the 30S ribosomal subunit. Contacts proteins S8 and S17. May interact with IF1 in the 30S initiation complex.

Its function is as follows. With S4 and S5 plays an important role in translational accuracy. Interacts with and stabilizes bases of the 16S rRNA that are involved in tRNA selection in the A site and with the mRNA backbone. Located at the interface of the 30S and 50S subunits, it traverses the body of the 30S subunit contacting proteins on the other side and probably holding the rRNA structure together. The combined cluster of proteins S8, S12 and S17 appears to hold together the shoulder and platform of the 30S subunit. This chain is Small ribosomal subunit protein uS12, found in Shewanella halifaxensis (strain HAW-EB4).